A 305-amino-acid chain; its full sequence is Lipoyl synthase (305 aa).

[4Fe-4S] cluster contacts are provided by Cys41, Cys46, Cys52, Cys68, Cys72, Cys75, and Ser281. The Radical SAM core domain occupies 54–270 (GARRTATFMI…RKVAMDKGFK (217 aa)). Basic and acidic residues predominate over residues 283-298 (HADEQVNEAAKEKQRQ). A disordered region spans residues 283–305 (HADEQVNEAAKEKQRQGEAQLNS).

It belongs to the radical SAM superfamily. Lipoyl synthase family. The cofactor is [4Fe-4S] cluster.

The protein resides in the cytoplasm. It carries out the reaction [[Fe-S] cluster scaffold protein carrying a second [4Fe-4S](2+) cluster] + N(6)-octanoyl-L-lysyl-[protein] + 2 oxidized [2Fe-2S]-[ferredoxin] + 2 S-adenosyl-L-methionine + 4 H(+) = [[Fe-S] cluster scaffold protein] + N(6)-[(R)-dihydrolipoyl]-L-lysyl-[protein] + 4 Fe(3+) + 2 hydrogen sulfide + 2 5'-deoxyadenosine + 2 L-methionine + 2 reduced [2Fe-2S]-[ferredoxin]. The protein operates within protein modification; protein lipoylation via endogenous pathway; protein N(6)-(lipoyl)lysine from octanoyl-[acyl-carrier-protein]. Functionally, catalyzes the radical-mediated insertion of two sulfur atoms into the C-6 and C-8 positions of the octanoyl moiety bound to the lipoyl domains of lipoate-dependent enzymes, thereby converting the octanoylated domains into lipoylated derivatives. The chain is Lipoyl synthase from Staphylococcus aureus (strain bovine RF122 / ET3-1).